Consider the following 185-residue polypeptide: NAD(P)H-dependent FAD/FMN reductase GTNG_3158 (185 aa).

As to quaternary structure, anthranilate 3-monooxygenase consists of a reductase component (GTNG_3158) and an oxygenase component HpaH.

It carries out the reaction FADH2 + NAD(+) = FAD + NADH + 2 H(+). The enzyme catalyses FADH2 + NADP(+) = FAD + NADPH + 2 H(+). Functionally, involved in the pathway of tryptophan degradation. Reduces FAD/FMN to FADH(2)/FMNH(2), which are subsequently used for the hydroxylation of anthranilate. It can reduce either FAD or flavin mononucleotide (FMN) but prefers FAD. The enzyme has a slight preference for NADPH as acceptor. The protein is NAD(P)H-dependent FAD/FMN reductase GTNG_3158 of Geobacillus thermodenitrificans (strain NG80-2).